A 208-amino-acid chain; its full sequence is Small ribosomal subunit protein uS3 (208 aa).

The region spanning 16–85 (VDEYLKNKLP…KPQIEVKQIE (70 aa)) is the KH type-2 domain.

It belongs to the universal ribosomal protein uS3 family. In terms of assembly, part of the 30S ribosomal subunit.

Its function is as follows. Binds the lower part of the 30S subunit head. The protein is Small ribosomal subunit protein uS3 of Methanococcus aeolicus (strain ATCC BAA-1280 / DSM 17508 / OCM 812 / Nankai-3).